The following is a 315-amino-acid chain: Universal stress protein E (315 aa).

The protein belongs to the universal stress protein A family.

The protein resides in the cytoplasm. Functionally, required for resistance to DNA-damaging agents. This is Universal stress protein E (uspE) from Salmonella typhi.